The sequence spans 520 residues: GMP synthase [glutamine-hydrolyzing] (520 aa).

In terms of domain architecture, Glutamine amidotransferase type-1 spans 9–202 (TILIIDFGSQ…VHRIVGVKPG (194 aa)). C86 (nucleophile) is an active-site residue. Active-site residues include H176 and E178. Residues 203 to 395 (WTMGAYREQA…LGLPDSFIGR (193 aa)) enclose the GMPS ATP-PPase domain. Position 230–236 (230–236 (SGGVDSS)) interacts with ATP.

Homodimer.

The catalysed reaction is XMP + L-glutamine + ATP + H2O = GMP + L-glutamate + AMP + diphosphate + 2 H(+). It functions in the pathway purine metabolism; GMP biosynthesis; GMP from XMP (L-Gln route): step 1/1. Its function is as follows. Catalyzes the synthesis of GMP from XMP. The chain is GMP synthase [glutamine-hydrolyzing] from Brucella ovis (strain ATCC 25840 / 63/290 / NCTC 10512).